A 326-amino-acid polypeptide reads, in one-letter code: Beta-ketoacyl-[acyl-carrier-protein] synthase III (326 aa).

Active-site residues include C112 and H251. The ACP-binding stretch occupies residues 252–256 (QANSR). N281 is a catalytic residue.

This sequence belongs to the thiolase-like superfamily. FabH family. As to quaternary structure, homodimer.

It is found in the cytoplasm. It catalyses the reaction malonyl-[ACP] + acetyl-CoA + H(+) = 3-oxobutanoyl-[ACP] + CO2 + CoA. The protein operates within lipid metabolism; fatty acid biosynthesis. Its function is as follows. Catalyzes the condensation reaction of fatty acid synthesis by the addition to an acyl acceptor of two carbons from malonyl-ACP. Catalyzes the first condensation reaction which initiates fatty acid synthesis and may therefore play a role in governing the total rate of fatty acid production. Possesses both acetoacetyl-ACP synthase and acetyl transacylase activities. Its substrate specificity determines the biosynthesis of branched-chain and/or straight-chain of fatty acids. This Clostridium botulinum (strain Okra / Type B1) protein is Beta-ketoacyl-[acyl-carrier-protein] synthase III.